The following is a 135-amino-acid chain: ATP synthase epsilon chain (135 aa).

It belongs to the ATPase epsilon chain family. As to quaternary structure, F-type ATPases have 2 components, CF(1) - the catalytic core - and CF(0) - the membrane proton channel. CF(1) has five subunits: alpha(3), beta(3), gamma(1), delta(1), epsilon(1). CF(0) has three main subunits: a, b and c.

It is found in the cell inner membrane. Its function is as follows. Produces ATP from ADP in the presence of a proton gradient across the membrane. This Rhodopseudomonas palustris (strain HaA2) protein is ATP synthase epsilon chain.